Consider the following 479-residue polypeptide: MLPVVALVGRPNVGKSTLFNRLTRTRDALVADFPGLTRDRKYGQANYDGYQFIVIDTGGIHGDEEGIDEEMAKQSLLAVDEADVVLFMVDARDGVTVGDQAIADHLRKQNKKVYLVCNKIDGIDAHSAMADFYSLSLGELYGIAAAHGRGVEQLLEICFKPIAEEYPDVIVPKDVASEELEHDEIDYDKLPLKLAIVGRPNVGKSTLINRILGEERVVVYDMPGTTRDSVYIPMQRNEREYVLIDTAGVRRRGRIGEAIEKFSVVKTLQAIEDANVVLIVVDARETISDQDLNLIGFALNAGRSIVIAVNKWDGLQNDHKEEIKRELDRRLGFVDFARLHFISALHGTGVGHLFESVEEAYASATQRISTSKLTKIMEMAQEEHQPPLVSGRRVKLKYAHAGGYNPPRIIIHGNQVKDLPGAYQRYLINYFRKSLGVMGTPIKVEFREPVNPYEGKKNQLTLSQQRKRRRLMKFLKKKK.

EngA-type G domains lie at 3 to 166 (PVVA…AEEY) and 192 to 365 (LKLA…ASAT). GTP-binding positions include 9-16 (GRPNVGKS), 56-60 (DTGGI), 118-121 (NKID), 198-205 (GRPNVGKS), 245-249 (DTAGV), and 310-313 (NKWD). In terms of domain architecture, KH-like spans 366-450 (QRISTSKLTK…PIKVEFREPV (85 aa)).

The protein belongs to the TRAFAC class TrmE-Era-EngA-EngB-Septin-like GTPase superfamily. EngA (Der) GTPase family. As to quaternary structure, associates with the 50S ribosomal subunit.

GTPase that plays an essential role in the late steps of ribosome biogenesis. The sequence is that of GTPase Der from Idiomarina loihiensis (strain ATCC BAA-735 / DSM 15497 / L2-TR).